The chain runs to 213 residues: Orotate phosphoribosyltransferase (213 aa).

Residue lysine 26 participates in 5-phospho-alpha-D-ribose 1-diphosphate binding. 34 to 35 (FF) contacts orotate. Residues 72–73 (YK), arginine 99, lysine 100, lysine 103, histidine 105, and 124–132 (DDVITAGTA) each bind 5-phospho-alpha-D-ribose 1-diphosphate. Threonine 128 and arginine 156 together coordinate orotate.

The protein belongs to the purine/pyrimidine phosphoribosyltransferase family. PyrE subfamily. As to quaternary structure, homodimer. Mg(2+) serves as cofactor.

It carries out the reaction orotidine 5'-phosphate + diphosphate = orotate + 5-phospho-alpha-D-ribose 1-diphosphate. It participates in pyrimidine metabolism; UMP biosynthesis via de novo pathway; UMP from orotate: step 1/2. In terms of biological role, catalyzes the transfer of a ribosyl phosphate group from 5-phosphoribose 1-diphosphate to orotate, leading to the formation of orotidine monophosphate (OMP). This is Orotate phosphoribosyltransferase from Haemophilus ducreyi (strain 35000HP / ATCC 700724).